The following is a 786-amino-acid chain: MAMWIQAQQLQGDALHQMQALYGQHFPIEVRHYLSQWIESQAWDSIDLDNPQENIKATQLLEGLVQELQKKAEHQVGEDGFLLKIKLGHYATQLQNTYDRCPMELVRCIRHILYNEQRLVREANNGSSPAGSLADAMSQKHLQINQTFEELRLITQDTESELKKLQQTQEYFIIQYQESLRIQAQFAQLAQLNPQERMSRETALQQKQVSLETWLQREAQTLQQYRVELAEKHQKTLQLLRKQQTIILDDELIQWKRRQQLAGNGGPPEGSLDVLQSWCEKLAEIIWQNRQQIRRLEHLCQQLPIPGPVEEMLAEVNATITDIISALSTSTFIIEKQPPQVLKTQTKFAATVRLLVGGKLNVHMNPPQVKATIISEQQAKSLLKNENTRNDYSGEILNNCCVMEYHQATGTLSAHFRNMSLKRIKRSDRRGAESVTEEKFTILFDSQFSVGGNELVFQVKTLSLPVVVIVHGSQDNNATATVLWDNAFREPGRVPFAVPDKVLWPQLCEALNMKFKAEVQSNRGLTKENLVFLAQKLFNSSSNHLEDYNSMSVSWSQFNRENLPGRNYTFWQWFDGVMEVLKKHLKPHWNDGAILGFVNKQQAHDLLINKPDGTFLLRFSDSEIGGITIAWKFDSQERMFWNLMPFTTRDFSIRSLADRLGDLNYLIYVFPDRPKDEVYSKYYTPVPCERATAKAADGYVKPQIKQVVPEFVNASTDAGSGATYMDQAPSPVVCPQAHYNMYPQNPDSVLDTDGDFDLEDTMDVARRVEELLGRPMDSQWIPHAQS.

Tyrosine 90 is subject to Phosphotyrosine. Residue serine 128 is modified to Phosphoserine. Residues 589-686 form the SH2 domain; sequence WNDGAILGFV…EVYSKYYTPV (98 aa). Phosphotyrosine is present on residues tyrosine 682 and tyrosine 699.

It belongs to the transcription factor STAT family. As to quaternary structure, upon activation, forms a homodimer or a heterodimer with a related family member. Binds NR3C1. Interacts with NCOA1. Interacts with NMI. Interacts with SOCS7. Interacts (via SH2 domain) with INSR. Interacts with CPEB3; this inhibits STAT5B-mediated transcriptional activation. Tyrosine phosphorylated in response to signaling via activated KIT, resulting in translocation to the nucleus. Tyrosine phosphorylated in response to signaling via activated FLT3; wild-type FLT3 results in much weaker phosphorylation than constitutively activated mutant FLT3. Alternatively, can be phosphorylated by JAK2. Phosphorylation at Tyr-699 by PTK6 or HCK leads to an increase of its transcriptional activity.

It is found in the cytoplasm. The protein resides in the nucleus. In terms of biological role, carries out a dual function: signal transduction and activation of transcription. Mediates cellular responses to the cytokine KITLG/SCF and other growth factors. Binds to the GAS element and activates PRL-induced transcription. Positively regulates hematopoietic/erythroid differentiation. The chain is Signal transducer and activator of transcription 5B (Stat5b) from Rattus norvegicus (Rat).